We begin with the raw amino-acid sequence, 261 residues long: MTHQTHAYHMVNPSPWPLTGALSALLMTSGLIMWFHFNSTILLMLGLTTNMLTMYQWWRDIIRESTFQGHHTPTVQKGLRYGMILFIISEVLFFTGFFWAFYHSSLAPTPELGGCWPPTGIHPLNPLEVPLLNTSVLLASGVSITWAHHSLMEGNRNHMLQALFITIALGVYFTLLQASEYYEAPFTISDGVYGSTFFVATGFHGLHVIIGSTFLIVCFFRQLKFHFTSSHHFGFEAAAWYWHFVDVVWLFLYVSIYWWGS.

Topologically, residues 1–15 (MTHQTHAYHMVNPSP) are mitochondrial matrix. A helical transmembrane segment spans residues 16–34 (WPLTGALSALLMTSGLIMW). At 35–40 (FHFNST) the chain is on the mitochondrial intermembrane side. The chain crosses the membrane as a helical span at residues 41–66 (ILLMLGLTTNMLTMYQWWRDIIREST). Topologically, residues 67-72 (FQGHHT) are mitochondrial matrix. Residues 73–105 (PTVQKGLRYGMILFIISEVLFFTGFFWAFYHSS) traverse the membrane as a helical segment. The Mitochondrial intermembrane segment spans residues 106–128 (LAPTPELGGCWPPTGIHPLNPLE). Residues 129 to 152 (VPLLNTSVLLASGVSITWAHHSLM) form a helical membrane-spanning segment. At 153 to 155 (EGN) the chain is on the mitochondrial matrix side. The helical transmembrane segment at 156–183 (RNHMLQALFITIALGVYFTLLQASEYYE) threads the bilayer. Residues 184-190 (APFTISD) are Mitochondrial intermembrane-facing. A helical membrane pass occupies residues 191 to 223 (GVYGSTFFVATGFHGLHVIIGSTFLIVCFFRQL). Over 224-232 (KFHFTSSHH) the chain is Mitochondrial matrix. Residues 233–256 (FGFEAAAWYWHFVDVVWLFLYVSI) traverse the membrane as a helical segment. Residues 257-261 (YWWGS) lie on the Mitochondrial intermembrane side of the membrane.

The protein belongs to the cytochrome c oxidase subunit 3 family. As to quaternary structure, component of the cytochrome c oxidase (complex IV, CIV), a multisubunit enzyme composed of 14 subunits. The complex is composed of a catalytic core of 3 subunits MT-CO1, MT-CO2 and MT-CO3, encoded in the mitochondrial DNA, and 11 supernumerary subunits COX4I, COX5A, COX5B, COX6A, COX6B, COX6C, COX7A, COX7B, COX7C, COX8 and NDUFA4, which are encoded in the nuclear genome. The complex exists as a monomer or a dimer and forms supercomplexes (SCs) in the inner mitochondrial membrane with NADH-ubiquinone oxidoreductase (complex I, CI) and ubiquinol-cytochrome c oxidoreductase (cytochrome b-c1 complex, complex III, CIII), resulting in different assemblies (supercomplex SCI(1)III(2)IV(1) and megacomplex MCI(2)III(2)IV(2)).

Its subcellular location is the mitochondrion inner membrane. The enzyme catalyses 4 Fe(II)-[cytochrome c] + O2 + 8 H(+)(in) = 4 Fe(III)-[cytochrome c] + 2 H2O + 4 H(+)(out). Component of the cytochrome c oxidase, the last enzyme in the mitochondrial electron transport chain which drives oxidative phosphorylation. The respiratory chain contains 3 multisubunit complexes succinate dehydrogenase (complex II, CII), ubiquinol-cytochrome c oxidoreductase (cytochrome b-c1 complex, complex III, CIII) and cytochrome c oxidase (complex IV, CIV), that cooperate to transfer electrons derived from NADH and succinate to molecular oxygen, creating an electrochemical gradient over the inner membrane that drives transmembrane transport and the ATP synthase. Cytochrome c oxidase is the component of the respiratory chain that catalyzes the reduction of oxygen to water. Electrons originating from reduced cytochrome c in the intermembrane space (IMS) are transferred via the dinuclear copper A center (CU(A)) of subunit 2 and heme A of subunit 1 to the active site in subunit 1, a binuclear center (BNC) formed by heme A3 and copper B (CU(B)). The BNC reduces molecular oxygen to 2 water molecules using 4 electrons from cytochrome c in the IMS and 4 protons from the mitochondrial matrix. This is Cytochrome c oxidase subunit 3 (MT-CO3) from Aepyceros melampus (Impala).